The primary structure comprises 282 residues: ESX-1 secretion-associated protein EspG1 (282 aa).

Belongs to the EspG family. In terms of assembly, interacts specifically with ESX-1-dependent PE/PPE proteins.

The protein resides in the cytoplasm. In terms of biological role, part of the ESX-1 / type VII specialized secretion system (T7SS), which exports several proteins including EsxA and EsxB. Specific chaperone for cognate PE/PPE proteins, plays an important role in preventing aggregation of PE/PPE dimers. Also plays a role in DNA conjugation, in at least recipient strain. This is ESX-1 secretion-associated protein EspG1 from Mycolicibacterium smegmatis (strain ATCC 700084 / mc(2)155) (Mycobacterium smegmatis).